The following is a 343-amino-acid chain: Arginine N-succinyltransferase (343 aa).

Residue Leu-125 participates in succinyl-CoA binding. His-229 serves as the catalytic Proton donor.

The protein belongs to the arginine N-succinyltransferase family.

The enzyme catalyses succinyl-CoA + L-arginine = N(2)-succinyl-L-arginine + CoA + H(+). Its pathway is amino-acid degradation; L-arginine degradation via AST pathway; L-glutamate and succinate from L-arginine: step 1/5. Functionally, catalyzes the transfer of succinyl-CoA to arginine to produce N(2)-succinylarginine. In Photorhabdus laumondii subsp. laumondii (strain DSM 15139 / CIP 105565 / TT01) (Photorhabdus luminescens subsp. laumondii), this protein is Arginine N-succinyltransferase.